The chain runs to 514 residues: Membrane-bound lytic murein transglycosylase F (514 aa).

The signal sequence occupies residues 1–30; sequence MKKLKINYLFIGILTLLLAAALWPSIPWFG. Positions 31–269 are non-LT domain; that stretch reads KTENHIAAIQ…RIEEKYLGHG (239 aa). The segment at 270–514 is LT domain; sequence DDFDYVDTRS…LFTPQKKEEK (245 aa). Residue Glu314 is part of the active site.

It in the N-terminal section; belongs to the bacterial solute-binding protein 3 family. In the C-terminal section; belongs to the transglycosylase Slt family.

It localises to the cell outer membrane. It carries out the reaction Exolytic cleavage of the (1-&gt;4)-beta-glycosidic linkage between N-acetylmuramic acid (MurNAc) and N-acetylglucosamine (GlcNAc) residues in peptidoglycan, from either the reducing or the non-reducing ends of the peptidoglycan chains, with concomitant formation of a 1,6-anhydrobond in the MurNAc residue.. Functionally, murein-degrading enzyme that degrades murein glycan strands and insoluble, high-molecular weight murein sacculi, with the concomitant formation of a 1,6-anhydromuramoyl product. Lytic transglycosylases (LTs) play an integral role in the metabolism of the peptidoglycan (PG) sacculus. Their lytic action creates space within the PG sacculus to allow for its expansion as well as for the insertion of various structures such as secretion systems and flagella. In Salmonella paratyphi A (strain ATCC 9150 / SARB42), this protein is Membrane-bound lytic murein transglycosylase F.